We begin with the raw amino-acid sequence, 911 residues long: Protein translocase subunit SecA (911 aa).

ATP contacts are provided by residues glutamine 86, 104–108, and aspartate 494; that span reads GEGKT. The segment at 856–911 is disordered; sequence VEGIDAPQRPAQLRFTGPSEDGQSAVTRSGTDSGATVAAGTNRRSRRQAERRGRRG. A compositionally biased stretch (polar residues) spans 876–889; sequence DGQSAVTRSGTDSG. Over residues 902-911 the composition is skewed to basic and acidic residues; it reads RQAERRGRRG.

It belongs to the SecA family. As to quaternary structure, monomer and homodimer. Part of the essential Sec protein translocation apparatus which comprises SecA, SecYEG and auxiliary proteins SecDF. Other proteins may also be involved.

Its subcellular location is the cell membrane. The protein localises to the cytoplasm. It catalyses the reaction ATP + H2O + cellular proteinSide 1 = ADP + phosphate + cellular proteinSide 2.. Its function is as follows. Part of the Sec protein translocase complex. Interacts with the SecYEG preprotein conducting channel. Has a central role in coupling the hydrolysis of ATP to the transfer of proteins into and across the cell membrane, serving as an ATP-driven molecular motor driving the stepwise translocation of polypeptide chains across the membrane. The chain is Protein translocase subunit SecA from Micrococcus luteus (strain ATCC 4698 / DSM 20030 / JCM 1464 / CCM 169 / CCUG 5858 / IAM 1056 / NBRC 3333 / NCIMB 9278 / NCTC 2665 / VKM Ac-2230) (Micrococcus lysodeikticus).